Here is a 494-residue protein sequence, read N- to C-terminus: Glycerol kinase (494 aa).

Residue threonine 13 participates in ADP binding. ATP-binding residues include threonine 13, threonine 14, and serine 15. Threonine 13 contacts sn-glycerol 3-phosphate. ADP is bound at residue arginine 17. Sn-glycerol 3-phosphate is bound by residues arginine 83, glutamate 84, tyrosine 135, and aspartate 244. Residues arginine 83, glutamate 84, tyrosine 135, aspartate 244, and glutamine 245 each contribute to the glycerol site. 2 residues coordinate ADP: threonine 266 and glycine 309. Positions 266, 309, 313, and 410 each coordinate ATP. ADP-binding residues include glycine 410 and asparagine 414.

This sequence belongs to the FGGY kinase family.

The enzyme catalyses glycerol + ATP = sn-glycerol 3-phosphate + ADP + H(+). It participates in polyol metabolism; glycerol degradation via glycerol kinase pathway; sn-glycerol 3-phosphate from glycerol: step 1/1. Inhibited by fructose 1,6-bisphosphate (FBP). In terms of biological role, key enzyme in the regulation of glycerol uptake and metabolism. Catalyzes the phosphorylation of glycerol to yield sn-glycerol 3-phosphate. This chain is Glycerol kinase, found in Shewanella sp. (strain ANA-3).